A 366-amino-acid chain; its full sequence is 3-dehydroquinate synthase (366 aa).

Residues 71–76 (DGEKYK), 105–109 (GVIGD), 129–130 (TT), lysine 142, lysine 151, and 169–172 (TLQT) contribute to the NAD(+) site. Zn(2+)-binding residues include glutamate 184, histidine 247, and histidine 264.

Belongs to the sugar phosphate cyclases superfamily. Dehydroquinate synthase family. It depends on Co(2+) as a cofactor. Zn(2+) is required as a cofactor. Requires NAD(+) as cofactor.

It is found in the cytoplasm. It carries out the reaction 7-phospho-2-dehydro-3-deoxy-D-arabino-heptonate = 3-dehydroquinate + phosphate. The protein operates within metabolic intermediate biosynthesis; chorismate biosynthesis; chorismate from D-erythrose 4-phosphate and phosphoenolpyruvate: step 2/7. In terms of biological role, catalyzes the conversion of 3-deoxy-D-arabino-heptulosonate 7-phosphate (DAHP) to dehydroquinate (DHQ). This chain is 3-dehydroquinate synthase, found in Actinobacillus pleuropneumoniae serotype 5b (strain L20).